The primary structure comprises 149 residues: Epoxide hydrolase EphG (149 aa).

D93 acts as the Proton donor in catalysis. Residue D122 is the Proton acceptor of the active site.

It belongs to the limonene-1,2-epoxide hydrolase family. As to quaternary structure, homodimer. Is also present as monomer in solution.

It carries out the reaction an epoxide + H2O = an ethanediol. The catalysed reaction is 5,6alpha-epoxy-5alpha-cholestan-3beta-ol + H2O = 5alpha-cholestane-3beta,5,6beta-triol. It catalyses the reaction 5,6beta-epoxy-5beta-cholestan-3beta-ol + H2O = 5alpha-cholestane-3beta,5,6beta-triol. Is inhibited by the anti-epileptic drug valpromide (Ki value of about 100 uM). Its function is as follows. Epoxide hydrolase capable of hydrolyzing long or bulky lipophilic epoxides such as 9,10-epoxystearic acid and cholesterol 5,6-oxide in vitro. The physiological substrates have yet to be identified, but could be fatty acid or steroid derivatives. The chain is Epoxide hydrolase EphG (ephG) from Mycobacterium tuberculosis (strain ATCC 25618 / H37Rv).